Reading from the N-terminus, the 245-residue chain is Gas vesicle protein F (245 aa).

This sequence belongs to the gas vesicle GvpF/GvpL family. In terms of assembly, binds GvpA.

It localises to the gas vesicle. In terms of biological role, a minor component of the gas vesicle, may be involved in preventing GvpA aggregation during gas vesicle nucleation. Gas vesicles (GV) are hollow, gas filled proteinaceous nanostructures. During planktonic growth they allow positioning of the organism at a favorable depth for light or nutrient acquisition. The protein is Gas vesicle protein F of Dolichospermum flosaquae (Anabaena flos-aquae).